The sequence spans 313 residues: Carbamate kinase (313 aa).

The protein belongs to the carbamate kinase family.

The protein resides in the cytoplasm. The catalysed reaction is hydrogencarbonate + NH4(+) + ATP = carbamoyl phosphate + ADP + H2O + H(+). It participates in metabolic intermediate metabolism; carbamoyl phosphate degradation; CO(2) and NH(3) from carbamoyl phosphate: step 1/1. The sequence is that of Carbamate kinase (arcC) from Oenococcus oeni (Leuconostoc oenos).